Reading from the N-terminus, the 239-residue chain is Hexuronic acid methyltransferase AglP (239 aa).

This sequence belongs to the FkbM methyltransferase family.

It localises to the cytoplasm. The protein operates within cell surface structure biogenesis; S-layer biogenesis. Its function is as follows. Involved in the assembly of a N-linked pentasaccharide that decorates the S-layer glycoprotein and flagellins. S-adenosyl-L-methionine-dependent methyltransferase that modifies the hexuronic acid found at position 4 of the pentasaccharide. This is Hexuronic acid methyltransferase AglP (aglP) from Haloferax volcanii (strain ATCC 29605 / DSM 3757 / JCM 8879 / NBRC 14742 / NCIMB 2012 / VKM B-1768 / DS2) (Halobacterium volcanii).